Consider the following 256-residue polypeptide: BI1-like protein (256 aa).

The next 7 membrane-spanning stretches (helical) occupy residues Val53–Leu73, Pro85–Tyr105, Leu113–Met133, Ile138–Phe158, Phe167–Ile187, Met189–Phe209, and Glu228–Leu248.

Belongs to the BI1 family.

Its subcellular location is the membrane. The protein is BI1-like protein of Arabidopsis thaliana (Mouse-ear cress).